The chain runs to 212 residues: MKLFLDFLPIILFFLTFKVAEGRAEEAAAFATEHLGALVSGGVVGAAEAPVLLATVVVILATLAQVLYLKLRGQKVDTMLWVSLGLVTVMGGATIWFHSETFIKWKPSVLYWVMSAAFLLAPIVAGKDLLRAMLGGQIELPAFAWKKLNLAWAAFFAGMGVLNIWVAYNFSTSTWATFKAFGGMGLMFVFMLAQGLYMHRHMKVDGIKADES.

Transmembrane regions (helical) follow at residues 49–69 (APVL…VLYL), 78–98 (TMLW…IWFH), 105–125 (WKPS…PIVA), 150–170 (LAWA…AYNF), and 178–198 (FKAF…GLYM).

Belongs to the YciB family.

It is found in the cell inner membrane. Plays a role in cell envelope biogenesis, maintenance of cell envelope integrity and membrane homeostasis. The chain is Inner membrane-spanning protein YciB from Leptothrix cholodnii (strain ATCC 51168 / LMG 8142 / SP-6) (Leptothrix discophora (strain SP-6)).